The chain runs to 326 residues: Beta-ketoacyl-[acyl-carrier-protein] synthase III (326 aa).

Catalysis depends on residues Cys111 and His253. Residues 254-258 (QANSR) are ACP-binding. Residue Asn283 is part of the active site.

Belongs to the thiolase-like superfamily. FabH family. In terms of assembly, homodimer.

It is found in the cytoplasm. The catalysed reaction is malonyl-[ACP] + acetyl-CoA + H(+) = 3-oxobutanoyl-[ACP] + CO2 + CoA. It participates in lipid metabolism; fatty acid biosynthesis. Its function is as follows. Catalyzes the condensation reaction of fatty acid synthesis by the addition to an acyl acceptor of two carbons from malonyl-ACP. Catalyzes the first condensation reaction which initiates fatty acid synthesis and may therefore play a role in governing the total rate of fatty acid production. Possesses both acetoacetyl-ACP synthase and acetyl transacylase activities. Its substrate specificity determines the biosynthesis of branched-chain and/or straight-chain of fatty acids. The protein is Beta-ketoacyl-[acyl-carrier-protein] synthase III of Latilactobacillus sakei subsp. sakei (strain 23K) (Lactobacillus sakei subsp. sakei).